Reading from the N-terminus, the 362-residue chain is Mannose-1-phosphate guanyltransferase (362 aa).

It belongs to the transferase hexapeptide repeat family.

It is found in the cytoplasm. The enzyme catalyses alpha-D-mannose 1-phosphate + GTP + H(+) = GDP-alpha-D-mannose + diphosphate. It functions in the pathway nucleotide-sugar biosynthesis; GDP-alpha-D-mannose biosynthesis; GDP-alpha-D-mannose from alpha-D-mannose 1-phosphate (GTP route): step 1/1. Functionally, involved in cell wall synthesis where it is required for glycosylation. Involved in cell cycle progression through cell-size checkpoint. The polypeptide is Mannose-1-phosphate guanyltransferase (MPG1) (Candida albicans (strain SC5314 / ATCC MYA-2876) (Yeast)).